Consider the following 386-residue polypeptide: Queuine tRNA-ribosyltransferase (386 aa).

The Proton acceptor role is filled by aspartate 102. Residues 102-106, aspartate 156, glutamine 203, and glycine 230 each bind substrate; that span reads DSGGY. Residues 261–267 form an RNA binding region; the sequence is GVGKPDD. The active-site Nucleophile is the aspartate 280. Positions 285 to 289 are RNA binding; important for wobble base 34 recognition; that stretch reads TRSGR. Cysteine 318, cysteine 320, cysteine 323, and histidine 349 together coordinate Zn(2+).

The protein belongs to the queuine tRNA-ribosyltransferase family. In terms of assembly, homodimer. Within each dimer, one monomer is responsible for RNA recognition and catalysis, while the other monomer binds to the replacement base PreQ1. Requires Zn(2+) as cofactor.

It catalyses the reaction 7-aminomethyl-7-carbaguanine + guanosine(34) in tRNA = 7-aminomethyl-7-carbaguanosine(34) in tRNA + guanine. Its pathway is tRNA modification; tRNA-queuosine biosynthesis. In terms of biological role, catalyzes the base-exchange of a guanine (G) residue with the queuine precursor 7-aminomethyl-7-deazaguanine (PreQ1) at position 34 (anticodon wobble position) in tRNAs with GU(N) anticodons (tRNA-Asp, -Asn, -His and -Tyr). Catalysis occurs through a double-displacement mechanism. The nucleophile active site attacks the C1' of nucleotide 34 to detach the guanine base from the RNA, forming a covalent enzyme-RNA intermediate. The proton acceptor active site deprotonates the incoming PreQ1, allowing a nucleophilic attack on the C1' of the ribose to form the product. After dissociation, two additional enzymatic reactions on the tRNA convert PreQ1 to queuine (Q), resulting in the hypermodified nucleoside queuosine (7-(((4,5-cis-dihydroxy-2-cyclopenten-1-yl)amino)methyl)-7-deazaguanosine). This chain is Queuine tRNA-ribosyltransferase, found in Zymomonas mobilis subsp. mobilis (strain ATCC 31821 / ZM4 / CP4).